Consider the following 43-residue polypeptide: Methionine aminopeptidase (43 aa).

Belongs to the peptidase M24A family. Methionine aminopeptidase type 1 subfamily. Monomer. Co(2+) serves as cofactor. It depends on Zn(2+) as a cofactor. Mn(2+) is required as a cofactor. The cofactor is Fe(2+).

It carries out the reaction Release of N-terminal amino acids, preferentially methionine, from peptides and arylamides.. In terms of biological role, removes the N-terminal methionine from nascent proteins. The N-terminal methionine is often cleaved when the second residue in the primary sequence is small and uncharged (Met-Ala-, Cys, Gly, Pro, Ser, Thr, or Val). Requires deformylation of the N(alpha)-formylated initiator methionine before it can be hydrolyzed. The protein is Methionine aminopeptidase (map) of Klebsiella oxytoca.